The primary structure comprises 333 residues: Isopenicillin N synthase (333 aa).

Positions 87, 91, and 191 each coordinate isopenicillin N. N-[(5S)-5-amino-5-carboxypentanoyl]-L-cysteinyl-D-valine contacts are provided by R87, Y91, Y191, H216, and D218. Positions 180-290 constitute a Fe2OG dioxygenase domain; sequence DTLSCRSLMI…RLSLPFFLHA (111 aa). The Fe(2+) site is built by H216, D218, and H272. R281 provides a ligand contact to 2-oxoglutarate. Residue S283 coordinates isopenicillin N. An N-[(5S)-5-amino-5-carboxypentanoyl]-L-cysteinyl-D-valine-binding site is contributed by S283.

This sequence belongs to the iron/ascorbate-dependent oxidoreductase family. Requires Fe cation as cofactor. L-ascorbate serves as cofactor.

The catalysed reaction is N-[(5S)-5-amino-5-carboxypentanoyl]-L-cysteinyl-D-valine + O2 = isopenicillin N + 2 H2O. It functions in the pathway antibiotic biosynthesis; penicillin G biosynthesis; penicillin G from L-alpha-aminoadipate and L-cysteine and L-valine: step 2/3. Removes, in the presence of oxygen, 4 hydrogen atoms from delta-L-(alpha-aminoadipyl)-L-cysteinyl-D-valine (ACV) to form the azetidinone and thiazolidine rings of isopenicillin. The protein is Isopenicillin N synthase (pcbC) of Streptomyces microflavus (Streptomyces lipmanii).